A 586-amino-acid polypeptide reads, in one-letter code: Maltogenic alpha-amylase (586 aa).

Ca(2+) is bound by residues asparagine 147, asparagine 152, aspartate 153, glycine 172, and aspartate 174. Residues histidine 247 and arginine 326 each contribute to the substrate site. The active-site Nucleophile is aspartate 328. The active-site Proton donor is the glutamate 357. Residues 423-424 (HD), aspartate 468, and arginine 472 contribute to the substrate site.

The protein belongs to the glycosyl hydrolase 13 family. It depends on Ca(2+) as a cofactor.

The enzyme catalyses hydrolysis of (1-&gt;4)-alpha-D-glucosidic linkages in polysaccharides so as to remove successive alpha-maltose residues from the non-reducing ends of the chains.. Converts starch into maltose. In Bacillus acidopullulyticus, this protein is Maltogenic alpha-amylase.